The following is a 271-amino-acid chain: tRNA pseudouridine synthase A (271 aa).

Residue D52 is the Nucleophile of the active site. Y110 is a substrate binding site.

It belongs to the tRNA pseudouridine synthase TruA family. In terms of assembly, homodimer.

The catalysed reaction is uridine(38/39/40) in tRNA = pseudouridine(38/39/40) in tRNA. Formation of pseudouridine at positions 38, 39 and 40 in the anticodon stem and loop of transfer RNAs. In Maridesulfovibrio salexigens (strain ATCC 14822 / DSM 2638 / NCIMB 8403 / VKM B-1763) (Desulfovibrio salexigens), this protein is tRNA pseudouridine synthase A.